The sequence spans 659 residues: Hemocyanin subunit B (659 aa).

The signal sequence occupies residues M1–A18. Cu cation is bound by residues H198, H202, and H232. An N-linked (GlcNAc...) asparagine glycan is attached at N318. 3 residues coordinate Cu cation: H353, H357, and H393. A disulfide bond links C562 and C609.

This sequence belongs to the tyrosinase family. Hemocyanin subfamily. 36-chain polymer consisting of 6 hexamers, each of which includes 4 different chains, A, B, C and D. As to expression, hemolymph.

It localises to the secreted. Its subcellular location is the extracellular space. Its function is as follows. Hemocyanins are copper-containing oxygen carriers occurring freely dissolved in the hemolymph of many mollusks and arthropods. The protein is Hemocyanin subunit B (HCB) of Scutigera coleoptrata (House centipede).